Consider the following 89-residue polypeptide: Acylphosphatase (89 aa).

One can recognise an Acylphosphatase-like domain in the interval 3–89 (CKRWILYGRV…GNYGSFHIEY (87 aa)). Catalysis depends on residues arginine 18 and asparagine 36.

This sequence belongs to the acylphosphatase family.

The catalysed reaction is an acyl phosphate + H2O = a carboxylate + phosphate + H(+). In Petrotoga mobilis (strain DSM 10674 / SJ95), this protein is Acylphosphatase (acyP).